The primary structure comprises 308 residues: Cysteine proteinase 3 (308 aa).

The signal sequence occupies residues 1-13 (MFALILFVSLACA). The propeptide at 14 to 92 (NEVAFKQWAA…TSNVKAAVKA (79 aa)) is activation peptide. Disulfide bonds link Cys-112/Cys-153 and Cys-146/Cys-186. The active site involves Cys-115. Active-site residues include His-251 and Asn-271.

Belongs to the peptidase C1 family.

It is found in the cytoplasm. It localises to the cytoplasmic vesicle. Its subcellular location is the phagosome. It catalyses the reaction Hydrolysis of proteins, including basement membrane collagen and azocasein. Preferential cleavage: Arg-Arg-|-Xaa in small molecule substrates including Z-Arg-Arg-|-NHMec.. Its function is as follows. Cysteine protease which may be involved in pathogenicity. In Entamoeba histolytica (strain ATCC 30459 / HM-1:IMSS / ABRM), this protein is Cysteine proteinase 3.